The chain runs to 363 residues: NAD(P)H-quinone oxidoreductase subunit 1, chloroplastic (363 aa).

6 consecutive transmembrane segments (helical) span residues 30–50, 98–118, 129–149, 248–268, 300–320, and 343–363; these read LVPI…IVWL, FSIG…VIPF, IGIF…LMSG, YSGI…LLSS, IIGT…FLFI, and FLLP…LLSL.

The protein belongs to the complex I subunit 1 family. As to quaternary structure, NDH is composed of at least 16 different subunits, 5 of which are encoded in the nucleus.

It is found in the plastid. Its subcellular location is the chloroplast thylakoid membrane. It carries out the reaction a plastoquinone + NADH + (n+1) H(+)(in) = a plastoquinol + NAD(+) + n H(+)(out). It catalyses the reaction a plastoquinone + NADPH + (n+1) H(+)(in) = a plastoquinol + NADP(+) + n H(+)(out). NDH shuttles electrons from NAD(P)H:plastoquinone, via FMN and iron-sulfur (Fe-S) centers, to quinones in the photosynthetic chain and possibly in a chloroplast respiratory chain. The immediate electron acceptor for the enzyme in this species is believed to be plastoquinone. Couples the redox reaction to proton translocation, and thus conserves the redox energy in a proton gradient. This chain is NAD(P)H-quinone oxidoreductase subunit 1, chloroplastic, found in Gossypium barbadense (Sea Island cotton).